The sequence spans 148 residues: [Ribosomal protein bS18]-alanine N-acetyltransferase (148 aa).

The N-acetyltransferase domain maps to 2–147; sequence NTISSLETTD…DAIIMALPIS (146 aa). 69–71 is a binding site for acetyl-CoA; it reads IAV. Glu103 acts as the Proton acceptor in catalysis. Asn108 contributes to the acetyl-CoA binding site. The active-site Proton donor is Tyr115.

The protein belongs to the acetyltransferase family. RimI subfamily.

It is found in the cytoplasm. It carries out the reaction N-terminal L-alanyl-[ribosomal protein bS18] + acetyl-CoA = N-terminal N(alpha)-acetyl-L-alanyl-[ribosomal protein bS18] + CoA + H(+). Acetylates the N-terminal alanine of ribosomal protein bS18. The sequence is that of [Ribosomal protein bS18]-alanine N-acetyltransferase from Escherichia coli O157:H7.